The following is a 324-amino-acid chain: Short-chain dehydrogenase/reductase iacJ (324 aa).

The NADP(+) site is built by isoleucine 42, lysine 66, aspartate 93, asparagine 120, tyrosine 204, lysine 208, and threonine 239. Tyrosine 204 serves as the catalytic Proton donor. The active-site Lowers pKa of active site Tyr is lysine 208.

This sequence belongs to the short-chain dehydrogenases/reductases (SDR) family.

Its pathway is secondary metabolite biosynthesis. Short-chain dehydrogenase/reductase; part of the gene cluster that mediates the biosynthesis of iso-A82775C, a enylepoxycyclohexane and biosynthetic precursor of the chloropestolide anticancer natural products. Within the cluster, the prenyltransferase iacE prenylates siccayne to generate pestalodiol E, using dimethylallyl diphosphate (DMAPP) as cosubstrate. The probable oxidoreductase iacF is then involved in the epoxidation of pestalodiol F to pestalodiol F, which is further converted to pestalofone A by the short-chain dehydrogenase/reductase iacG. Iso-A82775C is subsequently generated from pestalofone A by the short-chain dehydrogenase/reductase iacC. Iso-A82775C is further condensed with maldoxin via a Diels-Alder reaction to produce the anticancer natural products chloropestolides A to E. The sequence is that of Short-chain dehydrogenase/reductase iacJ from Pestalotiopsis fici (strain W106-1 / CGMCC3.15140).